The chain runs to 232 residues: MSSDELKRQAAAAALEHVRDGMKLGLGTGSTAKHFVELLGERVRGGLNVVGVPTSEVTRADALRCGIALTTLDEVDRLDLTVDGADEINAALNLIKGGGGALLREKIVAAASDRMIVIADESKLVANLGRFPLPIEVNSFGLAATLRAIEEACAECGVFGPLSLRKGSDGHAFVTDGGHWIVDAQLGRIPDAPSLADQLNAIPGVVENGLFIGLASMAVLAGPNGIRIIERP.

Substrate contacts are provided by residues 28–31 (TGST), 83–86 (DGAD), and 96–99 (KGGG). Residue E105 is the Proton acceptor of the active site. K123 provides a ligand contact to substrate.

The protein belongs to the ribose 5-phosphate isomerase family. As to quaternary structure, homodimer.

It carries out the reaction aldehydo-D-ribose 5-phosphate = D-ribulose 5-phosphate. The protein operates within carbohydrate degradation; pentose phosphate pathway; D-ribose 5-phosphate from D-ribulose 5-phosphate (non-oxidative stage): step 1/1. Catalyzes the reversible conversion of ribose-5-phosphate to ribulose 5-phosphate. The chain is Ribose-5-phosphate isomerase A from Rhodopseudomonas palustris (strain BisB18).